A 627-amino-acid chain; its full sequence is Neuronal acetylcholine receptor subunit alpha-4 (627 aa).

Residues 1-31 (MELGGPGAPPPPLLPPLLLLLGAGFLPASSP) form the signal peptide. Topologically, residues 32–244 (VETRAHAEER…ITYAFVIRRL (213 aa)) are extracellular. Residue asparagine 59 is glycosylated (N-linked (GlcNAc...) asparagine). Valine 78 and glutamate 80 together coordinate Ca(2+). 2 N-linked (GlcNAc...) asparagine glycosylation sites follow: asparagine 109 and asparagine 176. 2 disulfide bridges follow: cysteine 163/cysteine 177 and cysteine 227/cysteine 228. A helical transmembrane segment spans residues 245-269 (PLFYTINLIVPCLLISCLTVLVFYL). The S-palmitoyl cysteine moiety is linked to residue cysteine 273. Helical transmembrane passes span 277-295 (VTLC…LLIT) and 311-332 (YLLF…VLNV). Over 333 to 600 (HHRSPRTHTM…WKYVAMVIDR (268 aa)) the chain is Cytoplasmic. The segment covering 384-399 (PGFWPEPEGEPGVVSG) has biased composition (low complexity). The disordered stretch occupies residues 384–463 (PGFWPEPEGE…PPPSTRAPGL (80 aa)). Serine 427 is subject to Phosphoserine. Residues 444-458 (SPCPLPDSCRPPPST) show a composition bias toward pro residues. Residue serine 541 is modified to Phosphoserine. A helical membrane pass occupies residues 601–619 (IFLWVFVIVCLLGTAGLFL).

Belongs to the ligand-gated ion channel (TC 1.A.9) family. Acetylcholine receptor (TC 1.A.9.1) subfamily. Alpha-4/CHRNA4 sub-subfamily. As to quaternary structure, neuronal AChR is composed of two different types of subunits: alpha and beta. CHRNA4 forms heteropentameric neuronal acetylcholine receptors with CHRNB2 and CHRNB4, as well as CHRNA5 and CHRNB3 as accesory subunits. Found in two major stoichiometric forms, LS (low agonist sensitivity): (CHRNA4)3:(CHRNB2)2 and HS (high agonist sensitivity): (CHRNA4)2:(CHRNB2)3, the two stoichiometric forms differ in their unitary conductance, calcium permeability, ACh sensitivity and potentiation by divalent cation. Cells produce predominantly an (CHRNA4)3:(CHRNB2)2 nAChR. The (CHRNA4)2:(CHRNB2)3 expression is selectively up-regulated by nicotine and has lower single channel conductance and calcium permeability. In the striatum, also forms CHRNA4:CHRNA6:CHRNB2 complexes. Also found in the stoichiometric form: (CHRNA4:CHRNB2)2:CHRNB3. Interacts with RIC3; which is required for proper folding and assembly. Interacts with LYPD6.

It localises to the synaptic cell membrane. It is found in the cell membrane. The catalysed reaction is Ca(2+)(in) = Ca(2+)(out). It catalyses the reaction K(+)(in) = K(+)(out). The enzyme catalyses Na(+)(in) = Na(+)(out). With respect to regulation, activated by a myriad of ligands such as acetylcholine, cytisine, nicotine, choline and epibatidine. Channel potentiation by calcium is stoichiometry-selective, CHRNA4:CHRNB2 nACh receptor is achieved by calcium association with topographically distinct sites framed by anionic residues within the CHRNA4 subunit and between the CHRNA4 and CHRNB2 subunits. nAChR activity is inhibited by the antagonist alpha-conotoxins BuIA, PnIA, GID and MII, small disulfide-constrained peptides from cone snails. Component of neuronal acetylcholine receptors (nAChRs) that function as pentameric, ligand-gated cation channels with high calcium permeability among other activities. nAChRs are excitatory neurotrasnmitter receptors formed by a collection of nAChR subunits known to mediate synaptic transmission in the nervous system and the neuromuscular junction. Each nAchR subunit confers differential attributes to channel properties, including activation, deactivation and desensitization kinetics, pH sensitivity, cation permeability, and binding to allosteric modulators. CHRNA4 forms heteropentameric neuronal acetylcholine receptors with CHRNB2 and CHRNB4, as well as CHRNA5 and CHRNB3 as accesory subunits. Is the most abundant nAChR subtype expressed in the central nervous system. Found in two major stoichiometric forms,(CHRNA4)3:(CHRNB2)2 and (CHRNA4)2:(CHRNB2)3, the two stoichiometric forms differ in their unitary conductance, calcium permeability, ACh sensitivity and potentiation by divalent cation. Involved in the modulation of calcium-dependent signaling pathways, influences the release of neurotransmitters, including dopamine, glutamate and GABA. The protein is Neuronal acetylcholine receptor subunit alpha-4 (CHRNA4) of Mustela putorius furo (European domestic ferret).